A 299-amino-acid chain; its full sequence is Probable lipid kinase YegS (299 aa).

The DAGKc domain occupies 2–133 (AEFPASLLIL…IDMAQVNKQT (132 aa)). ATP-binding positions include Thr40, 66-72 (GDGTINE), and Thr95. Mg(2+) contacts are provided by Leu215, Asp218, and Leu220. The active-site Proton acceptor is Glu271.

This sequence belongs to the diacylglycerol/lipid kinase family. YegS lipid kinase subfamily. It depends on Mg(2+) as a cofactor. Ca(2+) serves as cofactor.

The protein localises to the cytoplasm. In terms of biological role, probably phosphorylates lipids; the in vivo substrate is unknown. This is Probable lipid kinase YegS from Escherichia coli O45:K1 (strain S88 / ExPEC).